We begin with the raw amino-acid sequence, 630 residues long: MVNDKILYDSCKTFNIDASSAQSLIESGANPLYEYDGETPLKAYVTKKNNNIKNDVVILLLSSVDYKNINDFDIFEYLCSDNIDIDLLKLLISKGIEINSIKNGINIVEKYATTSNPNIDVFKLLLDKGIPTCSNIQYGYNIIPIQCTDYIYFNWDDEFDYLDYDYTTDYDNRMGKTVLYYYIITRSQDGYVTSLDVINYLISHENEMCHYTYRERTILYYYVDKCDIKREIFDVLFDSNYSGNELMHILSIYLRKQYRKKNHKIDNYIVDKLLSAHDTFYILELCNSLRNNVIISSILKRYTDSIQDLLSEYVSYHTVYINVIKCMIREGAILYRFKHINKYFKRFDNRDPKVVEYILKNGNVVVNDDNIINIMPLFPTLFIHESEVLSILEICKPYIDDINKIDKHGRSILYYCIESHSVALIEWLIDNGADINITTTYGSTCIGICVIMAHACIPEIAEIYIKILEIILSKLPTIECIKKTVDYLSNDRHLLIGNKAKSLLKICIKYFILVDYKYICDTYPSYIEYITDCEKEIADMCQIKINGTDMLTVMYKLNKPTKKRYVNNPIFTDWANKQYKFYNQIIYNANRLIEQSKKIDNMIDEVSADNNRLSTLPLELRHLIFSYAFL.

ANK repeat units follow at residues 36–69 (DGETPLKAYVTKKNNNIKNDVVILLLSSVDYKNI), 70–100 (NDFDIFEYLCSDNIDIDLLKLLISKGIEINS), 103–134 (NGINIVEKYATTSNPNIDVFKLLLDKGIPTCS), 174–210 (MGKTVLYYYIITRSQDGYVTSLDVINYLISHENEMCH), 338–367 (KHINKYFKRFDNRDPKVVEYILKNGNVVVN), and 408–437 (HGRSILYYCIESHSVALIEWLIDNGADINI).

It belongs to the orthopoxvirus OPG025 family. In terms of assembly, interacts with components of host SCF complex CUL1 and SKP1 and components of the cullin deneddylation/COP9 signalosome complex subunits COPS7A and COPS7B.

In terms of biological role, plays a role in the inhibition of host immune repsonse by counteracting the action of interferons on early events in the viral replication cycle. The sequence is that of Ankyrin repeat protein OPG025 (OPG025) from Monkeypox virus.